The following is a 116-amino-acid chain: Toxin CSTX-10 (116 aa).

Residues 1 to 20 form the signal peptide; that stretch reads MKVLVIFAVLSLVIFSNCSA. Residues 21–47 constitute a propeptide that is removed on maturation; the sequence is ETDEDFFGEESFEADDIIPFIAKEQVR. 4 disulfides stabilise this stretch: Cys-53–Cys-68, Cys-60–Cys-77, Cys-67–Cys-94, and Cys-79–Cys-92.

As to expression, expressed by the venom gland.

The protein localises to the secreted. It localises to the target cell membrane. Spider venom toxin that shows calcium channel blocking activity and exhibits cytolytic activity by affecting the outer leaflet curvature and/or pore formation across the membrane. It blocks L-type calcium channels (Cav1/CACNA1) in mammalian neurons at nanomolar concentrations. Furthermore, it produces a slow voltage-independent block of mid/low and high voltage-activated calcium channels in cockroach neurons. Potassium ions, histamine, M-ctenitoxin-Cs1a (AC P83619), CSTX-9 (AC P58604), and CSTX-13 (AC P83919) synergistically increase the insecticidal activity of this toxin. In vivo, it causes paralysis in blow flies and provokes death in drosophila. The protein is Toxin CSTX-10 of Cupiennius salei (American wandering spider).